The chain runs to 739 residues: Phosphoribosylformylglycinamidine synthase subunit PurL (739 aa).

The active site involves H54. 2 residues coordinate ATP: Y57 and K96. E98 contacts Mg(2+). Residues 99–102 and R121 contribute to the substrate site; that span reads SHNH. Catalysis depends on H100, which acts as the Proton acceptor. Residue D122 coordinates Mg(2+). Residue Q245 coordinates substrate. D273 is a Mg(2+) binding site. 317 to 319 serves as a coordination point for substrate; the sequence is ESQ. ATP contacts are provided by D500 and G537. N538 provides a ligand contact to Mg(2+). S540 contacts substrate.

This sequence belongs to the FGAMS family. As to quaternary structure, monomer. Part of the FGAM synthase complex composed of 1 PurL, 1 PurQ and 2 PurS subunits.

It localises to the cytoplasm. It carries out the reaction N(2)-formyl-N(1)-(5-phospho-beta-D-ribosyl)glycinamide + L-glutamine + ATP + H2O = 2-formamido-N(1)-(5-O-phospho-beta-D-ribosyl)acetamidine + L-glutamate + ADP + phosphate + H(+). The protein operates within purine metabolism; IMP biosynthesis via de novo pathway; 5-amino-1-(5-phospho-D-ribosyl)imidazole from N(2)-formyl-N(1)-(5-phospho-D-ribosyl)glycinamide: step 1/2. In terms of biological role, part of the phosphoribosylformylglycinamidine synthase complex involved in the purines biosynthetic pathway. Catalyzes the ATP-dependent conversion of formylglycinamide ribonucleotide (FGAR) and glutamine to yield formylglycinamidine ribonucleotide (FGAM) and glutamate. The FGAM synthase complex is composed of three subunits. PurQ produces an ammonia molecule by converting glutamine to glutamate. PurL transfers the ammonia molecule to FGAR to form FGAM in an ATP-dependent manner. PurS interacts with PurQ and PurL and is thought to assist in the transfer of the ammonia molecule from PurQ to PurL. The polypeptide is Phosphoribosylformylglycinamidine synthase subunit PurL (Bacillus cytotoxicus (strain DSM 22905 / CIP 110041 / 391-98 / NVH 391-98)).